Consider the following 510-residue polypeptide: Protein PLASTID TRANSCRIPTIONALLY ACTIVE 16, chloroplastic (510 aa).

The segment covering 1–14 (MASSSTSFPLTTAP) has biased composition (polar residues). Residues 1-19 (MASSSTSFPLTTAPPQGVR) constitute a chloroplast transit peptide. 2 disordered regions span residues 1–24 (MASSSTSFPLTTAPPQGVRFNRRK) and 38–58 (LGKTKGDDDSEGKQKGKNPFQ). The segment covering 41-51 (TKGDDDSEGKQ) has biased composition (basic and acidic residues). 94-123 (IFVAGATGQAGIRIAQTLLQRGFSVRAGVP) contacts NADP(+). The stretch at 354–403 (ARERAEEEAKVAADKAREAAEAAKEFEKQMQKLSEKEAEAASLAEDAQQK) forms a coiled coil. Serine 395 carries the post-translational modification Phosphoserine. The residue at position 451 (threonine 451) is a Phosphothreonine; by STN7. The disordered stretch occupies residues 453-493 (RGQAKARNLPPKKAVVKQRPSSPFASKPKEERPKKPEKEVR). Basic and acidic residues predominate over residues 479-493 (KPKEERPKKPEKEVR).

It belongs to the NAD(P)-dependent epimerase/dehydratase family. As to quaternary structure, component of the plastid transcriptionally active chromosome required for plastid gene expression. Interacts with DEGP1 under high light conditions and maybe its degradation target. Excluded from chloroplast nucleoid when phosphorylated on Thr-451 by STN7 that may regulate membrane-anchoring functions of the nucleoid.

It is found in the plastid. Its subcellular location is the chloroplast stroma. The protein resides in the chloroplast nucleoid. It localises to the chloroplast thylakoid membrane. Probably involved in the regulation of plastid gene expression. In Arabidopsis thaliana (Mouse-ear cress), this protein is Protein PLASTID TRANSCRIPTIONALLY ACTIVE 16, chloroplastic.